Reading from the N-terminus, the 103-residue chain is Ubiquitin-related modifier 1 (103 aa).

Glycine 103 carries the post-translational modification 1-thioglycine. A Glycyl lysine isopeptide (Gly-Lys) (interchain with K-? in acceptor proteins) cross-link involves residue glycine 103.

The protein belongs to the URM1 family. Post-translationally, C-terminal thiocarboxylation occurs in 2 steps, it is first acyl-adenylated (-COAMP) via the hesA/moeB/thiF part of UBA4, then thiocarboxylated (-COSH) via the rhodanese domain of UBA4.

The protein resides in the cytoplasm. Its pathway is tRNA modification; 5-methoxycarbonylmethyl-2-thiouridine-tRNA biosynthesis. In terms of biological role, acts as a sulfur carrier required for 2-thiolation of mcm(5)S(2)U at tRNA wobble positions of cytosolic tRNA(Lys), tRNA(Glu) and tRNA(Gln). Serves as sulfur donor in tRNA 2-thiolation reaction by being thiocarboxylated (-COSH) at its C-terminus by the MOCS3 homolog UBA4. The sulfur is then transferred to tRNA to form 2-thiolation of mcm(5)S(2)U. Prior mcm(5) tRNA modification by the elongator complex is required for 2-thiolation. Also acts as a ubiquitin-like protein (UBL) that is covalently conjugated via an isopeptide bond to lysine residues of target proteins such as AHP1. The thiocarboxylated form serves as substrate for conjugation and oxidative stress specifically induces the formation of UBL-protein conjugates. This chain is Ubiquitin-related modifier 1, found in Vanderwaltozyma polyspora (strain ATCC 22028 / DSM 70294 / BCRC 21397 / CBS 2163 / NBRC 10782 / NRRL Y-8283 / UCD 57-17) (Kluyveromyces polysporus).